Reading from the N-terminus, the 108-residue chain is Cell division topological specificity factor (108 aa).

It belongs to the MinE family.

Its function is as follows. Prevents the cell division inhibition by proteins MinC and MinD at internal division sites while permitting inhibition at polar sites. This ensures cell division at the proper site by restricting the formation of a division septum at the midpoint of the long axis of the cell. The polypeptide is Cell division topological specificity factor (Prochlorococcus marinus (strain MIT 9215)).